A 121-amino-acid polypeptide reads, in one-letter code: Putative iron-sulfur cluster insertion protein ErpA (121 aa).

3 residues coordinate iron-sulfur cluster: Cys49, Cys113, and Cys115.

The protein belongs to the HesB/IscA family. As to quaternary structure, homodimer. Iron-sulfur cluster serves as cofactor.

Required for insertion of 4Fe-4S clusters. This Verminephrobacter eiseniae (strain EF01-2) protein is Putative iron-sulfur cluster insertion protein ErpA.